The following is a 132-amino-acid chain: uncharacterized protein (132 aa).

Disordered regions lie at residues 36-69 and 97-132; these read GLAS…PNIS and QIND…PTAR. Serine 101 is subject to Phosphoserine.

In terms of assembly, copurifies with proteins HOL1, MMP1, PEX7 and PLB1.

This is an uncharacterized protein from Saccharomyces cerevisiae (strain ATCC 204508 / S288c) (Baker's yeast).